A 356-amino-acid polypeptide reads, in one-letter code: 3-isopropylmalate dehydrogenase (356 aa).

Residues Arg90, Arg100, Arg128, and Asp222 each coordinate substrate. Mg(2+) contacts are provided by Asp222, Asp246, and Asp250. Gly280–Asn292 serves as a coordination point for NAD(+).

It belongs to the isocitrate and isopropylmalate dehydrogenases family. LeuB type 1 subfamily. In terms of assembly, homodimer. Requires Mg(2+) as cofactor. The cofactor is Mn(2+).

The protein localises to the cytoplasm. It catalyses the reaction (2R,3S)-3-isopropylmalate + NAD(+) = 4-methyl-2-oxopentanoate + CO2 + NADH. It functions in the pathway amino-acid biosynthesis; L-leucine biosynthesis; L-leucine from 3-methyl-2-oxobutanoate: step 3/4. Its function is as follows. Catalyzes the oxidation of 3-carboxy-2-hydroxy-4-methylpentanoate (3-isopropylmalate) to 3-carboxy-4-methyl-2-oxopentanoate. The product decarboxylates to 4-methyl-2 oxopentanoate. In Albidiferax ferrireducens (strain ATCC BAA-621 / DSM 15236 / T118) (Rhodoferax ferrireducens), this protein is 3-isopropylmalate dehydrogenase.